We begin with the raw amino-acid sequence, 309 residues long: Porphobilinogen deaminase (309 aa).

Cys-242 is modified (S-(dipyrrolylmethanemethyl)cysteine).

It belongs to the HMBS family. In terms of assembly, monomer. Dipyrromethane serves as cofactor.

It catalyses the reaction 4 porphobilinogen + H2O = hydroxymethylbilane + 4 NH4(+). The protein operates within porphyrin-containing compound metabolism; protoporphyrin-IX biosynthesis; coproporphyrinogen-III from 5-aminolevulinate: step 2/4. Tetrapolymerization of the monopyrrole PBG into the hydroxymethylbilane pre-uroporphyrinogen in several discrete steps. This is Porphobilinogen deaminase from Hamiltonella defensa subsp. Acyrthosiphon pisum (strain 5AT).